Here is a 399-residue protein sequence, read N- to C-terminus: MSIISTRLNSIKPSPTLAVVKKTLELKKAGVNIIALGAGEPDFDTPDNIKEVAITSIKDGFTKYTNVDGIPLLKQAIKNKFKRENNIDYELDEIIVSTGGKQVIYNLFMASLDKGDEVIIPVPYWVSYPDMVALSTGTPIFVNCGIENNFKLTVEALERSITDKTKWLIINSPSNPTGAGYNCKELENIAKTLRKYPNVNIMSDDIYEHITFDDFKFYTLAQIAPDLKERIFTVNGVSKAYSMTGWRIGYGAGSKALIKAMTVIQSQSTSNPCSISQMAAIEALNGTQDYIKPNALNFQKKRDLALSILEKVIYFECYKPEGAFYLFVKCDKIFGTKTKSGKIIANSNHFSEYLLEEAKVAVVPGVAFGLDGYFRISYATSMQELKEACIRIKQACNTL.

L-aspartate is bound by residues glycine 39, tryptophan 125, and asparagine 175. Position 239 is an N6-(pyridoxal phosphate)lysine (lysine 239). Arginine 375 is an L-aspartate binding site.

Belongs to the class-I pyridoxal-phosphate-dependent aminotransferase family. As to quaternary structure, homodimer. Requires pyridoxal 5'-phosphate as cofactor.

Its subcellular location is the cytoplasm. It carries out the reaction L-aspartate + 2-oxoglutarate = oxaloacetate + L-glutamate. The enzyme catalyses L-arogenate + 2-oxoglutarate = prephenate + L-glutamate. Catalyzes the reversible conversion of aspartate and 2-oxoglutarate to glutamate and oxaloacetate. Can also transaminate prephenate in the presence of glutamate. The protein is Probable aspartate/prephenate aminotransferase (aatA) of Rickettsia typhi (strain ATCC VR-144 / Wilmington).